The following is a 372-amino-acid chain: Aryl-hydrocarbon-interacting protein-like 1 (372 aa).

Residues 53–145 (RQVDQPMHII…DLDELQKEPQ (93 aa)) form the PPIase FKBP-type domain. TPR repeat units lie at residues 178–211 (VPVL…LRNL), 230–263 (NTLT…HPGI), and 264–297 (VKAY…EPSM). Residues 315-372 (KQEEERLRCRNMLSQGATQPPTEPPAEPHTAPPAELSTGPPAEPPAELPLSPGHSLQH) are disordered. The span at 335-345 (PTEPPAEPHTA) shows a compositional bias: pro residues.

As to quaternary structure, interacts with NUB1.

The protein resides in the cytoplasm. It localises to the nucleus. Functionally, may be important in protein trafficking and/or protein folding and stabilization. The protein is Aryl-hydrocarbon-interacting protein-like 1 (AIPL1) of Papio cynocephalus (Yellow baboon).